The sequence spans 132 residues: Large ribosomal subunit protein uL14 (132 aa).

It belongs to the universal ribosomal protein uL14 family. In terms of assembly, part of the 50S ribosomal subunit. Forms a cluster with proteins L3 and L24e, part of which may contact the 16S rRNA in 2 intersubunit bridges.

Binds to 23S rRNA. Forms part of two intersubunit bridges in the 70S ribosome. The protein is Large ribosomal subunit protein uL14 of Methanosarcina mazei (strain ATCC BAA-159 / DSM 3647 / Goe1 / Go1 / JCM 11833 / OCM 88) (Methanosarcina frisia).